Consider the following 441-residue polypeptide: Ribulose bisphosphate carboxylase/oxygenase activase, chloroplastic (441 aa).

Val167–Gly174 is an ATP binding site.

It belongs to the RuBisCO activase family.

Its subcellular location is the plastid. It localises to the chloroplast stroma. Activation of RuBisCO (ribulose-1,5-bisphosphate carboxylase/oxygenase; EC 4.1.1.39) involves the ATP-dependent carboxylation of the epsilon-amino group of lysine leading to a carbamate structure. The protein is Ribulose bisphosphate carboxylase/oxygenase activase, chloroplastic (RCA1) of Phaseolus vulgaris (Kidney bean).